The primary structure comprises 127 residues: Large ribosomal subunit protein bL20 (127 aa).

It belongs to the bacterial ribosomal protein bL20 family.

Its function is as follows. Binds directly to 23S ribosomal RNA and is necessary for the in vitro assembly process of the 50S ribosomal subunit. It is not involved in the protein synthesizing functions of that subunit. This chain is Large ribosomal subunit protein bL20, found in Streptomyces avermitilis (strain ATCC 31267 / DSM 46492 / JCM 5070 / NBRC 14893 / NCIMB 12804 / NRRL 8165 / MA-4680).